The chain runs to 491 residues: La-related protein 6 (491 aa).

The segment at 1-87 (MAQSGGEARP…REDLEQEWKP (87 aa)) is disordered. An N-acetylalanine modification is found at alanine 2. A compositionally biased stretch (acidic residues) spans 24-37 (EAEDVDELEDEEEG). 2 positions are modified to phosphoserine: serine 56 and serine 58. Residues 86-177 (KPPDEELIKK…RRTTPVPLFP (92 aa)) form the HTH La-type RNA-binding domain. The RRM domain occupies 184–296 (KMLLVYDLYL…KAVLIGMKPP (113 aa)). Positions 186 to 193 (LLVYDLYL) match the Nuclear export signal motif. Disordered regions lie at residues 293–403 (MKPP…EEGR) and 423–491 (SSVT…RACV). The short motif at 296–302 (PKKKPAK) is the Nuclear localization signal element. Low complexity predominate over residues 332-346 (DESSANSSSDPESNP). Composition is skewed to polar residues over residues 359-386 (NKLS…SSPL) and 444-453 (QEKSPGTSPL). The SUZ-C domain occupies 427 to 485 (PSGSPWVRRRRQAEMGTQEKSPGTSPLLSRKMQTADGLPVGVLRLPRGPDNTRGFHGHE). The segment covering 482-491 (HGHERSRACV) has biased composition (basic and acidic residues).

Interacts (via the HTH domain) with VIM/vimentin. Interacts (via C-terminus) with non-muscle myosin MYH10. Interacts (via C-terminus) with DHX9. As to expression, expressed in numerous tissues.

The protein resides in the cytoplasm. It localises to the nucleus. Its function is as follows. Regulates the coordinated translation of type I collagen alpha-1 and alpha-2 mRNAs, CO1A1 and CO1A2. Stabilizes mRNAs through high-affinity binding of a stem-loop structure in their 5' UTR. This regulation requires VIM and MYH10 filaments, and the helicase DHX9. The chain is La-related protein 6 (LARP6) from Homo sapiens (Human).